A 380-amino-acid polypeptide reads, in one-letter code: Erythronate-4-phosphate dehydrogenase (380 aa).

Substrate contacts are provided by serine 45 and threonine 66. NAD(+) contacts are provided by residues 126-127 (QV), aspartate 146, threonine 174, 205-207 (ASR), and aspartate 231. Arginine 207 is an active-site residue. Residue glutamate 236 is part of the active site. Residue histidine 253 is the Proton donor of the active site. Glycine 256 contacts NAD(+). Tyrosine 257 lines the substrate pocket.

The protein belongs to the D-isomer specific 2-hydroxyacid dehydrogenase family. PdxB subfamily. As to quaternary structure, homodimer.

It is found in the cytoplasm. The enzyme catalyses 4-phospho-D-erythronate + NAD(+) = (R)-3-hydroxy-2-oxo-4-phosphooxybutanoate + NADH + H(+). Its pathway is cofactor biosynthesis; pyridoxine 5'-phosphate biosynthesis; pyridoxine 5'-phosphate from D-erythrose 4-phosphate: step 2/5. In terms of biological role, catalyzes the oxidation of erythronate-4-phosphate to 3-hydroxy-2-oxo-4-phosphonooxybutanoate. The chain is Erythronate-4-phosphate dehydrogenase from Pseudomonas syringae pv. syringae (strain B728a).